Consider the following 930-residue polypeptide: Carnosine synthase 1 (930 aa).

The interval 1-24 (MISVDRLSEEQALGMKEQEWAGPE) is disordered. An ATP-grasp domain is found at 624-825 (RPPPAAFSVP…LLLAAVLLAL (202 aa)). 650-716 (VPFPAVAKLE…MEYVPGTEHD (67 aa)) lines the ATP pocket. Residues Glu782, Glu794, and Asn796 each contribute to the Mg(2+) site. Residues Glu782, Glu794, and Asn796 each coordinate Mn(2+).

As to quaternary structure, homotetramer. The cofactor is Mg(2+). Mn(2+) serves as cofactor.

The enzyme catalyses beta-alanine + L-histidine + ATP = carnosine + ADP + phosphate + H(+). It catalyses the reaction 4-aminobutanoate + L-histidine + ATP = L-homocarnosine + ADP + phosphate + H(+). Its function is as follows. Catalyzes the synthesis of carnosine and homocarnosine. Carnosine is synthesized more efficiently than homocarnosine. The chain is Carnosine synthase 1 from Gallus gallus (Chicken).